The sequence spans 211 residues: Ubiquitin-conjugating enzyme E2 S (211 aa).

Residues 11 to 157 (HIIRQVYKEV…ARLMTEIHAQ (147 aa)) enclose the UBC core domain. Cysteine 95 (glycyl thioester intermediate) is an active-site residue. A disordered region spans residues 157-211 (QGSSLRGKDPTDPCSSASATLVSGDGPMAKKHAGDRDKKLAAKKKTDKKRALRRL). Basic residues predominate over residues 197-211 (AAKKKTDKKRALRRL).

The protein belongs to the ubiquitin-conjugating enzyme family.

It carries out the reaction S-ubiquitinyl-[E1 ubiquitin-activating enzyme]-L-cysteine + [E2 ubiquitin-conjugating enzyme]-L-cysteine = [E1 ubiquitin-activating enzyme]-L-cysteine + S-ubiquitinyl-[E2 ubiquitin-conjugating enzyme]-L-cysteine.. It participates in protein modification; protein ubiquitination. Functionally, catalyzes the covalent attachment of ubiquitin to other proteins. Acts as an essential factor of the anaphase promoting complex/cyclosome (APC/C), a cell cycle-regulated ubiquitin ligase that controls progression through mitosis. Acts by specifically elongating 'Lys-11'-linked polyubiquitin chains initiated by the E2 enzyme ube2c/ubch10 on APC/C substrates, enhancing the degradation of APC/C substrates by the proteasome and promoting mitotic exit. This Xenopus tropicalis (Western clawed frog) protein is Ubiquitin-conjugating enzyme E2 S (ube2s).